Here is a 487-residue protein sequence, read N- to C-terminus: GTPase Der (487 aa).

2 consecutive EngA-type G domains span residues P3 to A166 and I193 to V366. GTP contacts are provided by residues G9–S16, D56–I60, N118–D121, G199–S206, D246–V250, and N311–D314. One can recognise a KH-like domain in the interval T367 to E451. Basic and acidic residues predominate over residues K448 to L461. A disordered region spans residues K448–R487. Positions N467–R487 are enriched in basic residues.

The protein belongs to the TRAFAC class TrmE-Era-EngA-EngB-Septin-like GTPase superfamily. EngA (Der) GTPase family. Associates with the 50S ribosomal subunit.

In terms of biological role, GTPase that plays an essential role in the late steps of ribosome biogenesis. The sequence is that of GTPase Der from Pseudomonas putida (strain ATCC 47054 / DSM 6125 / CFBP 8728 / NCIMB 11950 / KT2440).